Consider the following 382-residue polypeptide: Beta-1,4-galactosyltransferase 6 (382 aa).

The Cytoplasmic portion of the chain corresponds to 1-14; sequence MSVLRRMMRVSNRS. The chain crosses the membrane as a helical; Signal-anchor for type II membrane protein span at residues 15-35; that stretch reads LLAFIFFFSLSSSCLYFIYVA. Residues 36 to 382 are Lumenal-facing; it reads PGIANTYLFM…MPELAPIEDY (347 aa). Residues N71, N75, N83, N84, N99, and N122 are each glycosylated (N-linked (GlcNAc...) asparagine). C108 and C152 form a disulfide bridge. Residues 163–167, 202–204, 229–230, Y258, and W290 contribute to the UDP-alpha-D-galactose site; these read PFRNR, FNR, and VD. C223 and C242 are oxidised to a cystine. A Mn(2+)-binding site is contributed by D230. 292 to 295 provides a ligand contact to N-acetyl-D-glucosamine; that stretch reads GEDD. N-linked (GlcNAc...) asparagine glycosylation occurs at N307. Mn(2+) is bound at residue H323. UDP-alpha-D-galactose is bound at residue 323 to 324; that stretch reads HH. Residue R334 participates in N-acetyl-D-glucosamine binding. N-linked (GlcNAc...) asparagine glycosylation occurs at N367.

The protein belongs to the glycosyltransferase 7 family. It depends on Mn(2+) as a cofactor. Requires Mg(2+) as cofactor. In terms of tissue distribution, high expression in brain and adrenal gland, lower in liver, lung, colon and peripheral white blood cells.

It is found in the golgi apparatus. It localises to the golgi stack membrane. The enzyme catalyses a beta-D-glucosyl-(1&lt;-&gt;1')-N-acylsphing-4-enine + UDP-alpha-D-galactose = a beta-D-Gal-(1-&gt;4)-beta-D-Glc-(1&lt;-&gt;1)-Cer(d18:1(4E)) + UDP + H(+). Its pathway is protein modification; protein glycosylation. It participates in sphingolipid metabolism. Its activity is regulated as follows. Inhibited by EDTA. Its function is as follows. Catalyzes the synthesis of lactosylceramide (LacCer) via the transfer of galactose from UDP-galactose to glucosylceramide (GlcCer). LacCer is the starting point in the biosynthesis of all gangliosides (membrane-bound glycosphingolipids) which play pivotal roles in the CNS including neuronal maturation and axonal and myelin formation. The polypeptide is Beta-1,4-galactosyltransferase 6 (Homo sapiens (Human)).